The sequence spans 273 residues: 4-hydroxy-tetrahydrodipicolinate reductase (273 aa).

NAD(+)-binding positions include 12–17 (GAGGRM) and Glu38. Arg39 is a binding site for NADP(+). NAD(+) is bound by residues 102 to 104 (GTT) and 126 to 129 (AANF). His159 serves as the catalytic Proton donor/acceptor. His160 lines the (S)-2,3,4,5-tetrahydrodipicolinate pocket. The active-site Proton donor is the Lys163. 169–170 (GT) is a binding site for (S)-2,3,4,5-tetrahydrodipicolinate.

Belongs to the DapB family. Homotetramer.

Its subcellular location is the cytoplasm. It catalyses the reaction (S)-2,3,4,5-tetrahydrodipicolinate + NAD(+) + H2O = (2S,4S)-4-hydroxy-2,3,4,5-tetrahydrodipicolinate + NADH + H(+). It carries out the reaction (S)-2,3,4,5-tetrahydrodipicolinate + NADP(+) + H2O = (2S,4S)-4-hydroxy-2,3,4,5-tetrahydrodipicolinate + NADPH + H(+). It participates in amino-acid biosynthesis; L-lysine biosynthesis via DAP pathway; (S)-tetrahydrodipicolinate from L-aspartate: step 4/4. Functionally, catalyzes the conversion of 4-hydroxy-tetrahydrodipicolinate (HTPA) to tetrahydrodipicolinate. In Escherichia fergusonii (strain ATCC 35469 / DSM 13698 / CCUG 18766 / IAM 14443 / JCM 21226 / LMG 7866 / NBRC 102419 / NCTC 12128 / CDC 0568-73), this protein is 4-hydroxy-tetrahydrodipicolinate reductase.